Here is a 431-residue protein sequence, read N- to C-terminus: Glucose-1-phosphate adenylyltransferase (431 aa).

Alpha-D-glucose 1-phosphate-binding positions include Gly163, 178-179 (EK), and Ser210.

Belongs to the bacterial/plant glucose-1-phosphate adenylyltransferase family. In terms of assembly, homotetramer.

The enzyme catalyses alpha-D-glucose 1-phosphate + ATP + H(+) = ADP-alpha-D-glucose + diphosphate. The protein operates within glycan biosynthesis; glycogen biosynthesis. Its function is as follows. Involved in the biosynthesis of ADP-glucose, a building block required for the elongation reactions to produce glycogen. Catalyzes the reaction between ATP and alpha-D-glucose 1-phosphate (G1P) to produce pyrophosphate and ADP-Glc. In Synechococcus sp. (strain WH7803), this protein is Glucose-1-phosphate adenylyltransferase.